A 199-amino-acid chain; its full sequence is Probable nicotinate-nucleotide adenylyltransferase (199 aa).

Belongs to the NadD family.

It catalyses the reaction nicotinate beta-D-ribonucleotide + ATP + H(+) = deamido-NAD(+) + diphosphate. Its pathway is cofactor biosynthesis; NAD(+) biosynthesis; deamido-NAD(+) from nicotinate D-ribonucleotide: step 1/1. In terms of biological role, catalyzes the reversible adenylation of nicotinate mononucleotide (NaMN) to nicotinic acid adenine dinucleotide (NaAD). This Roseobacter denitrificans (strain ATCC 33942 / OCh 114) (Erythrobacter sp. (strain OCh 114)) protein is Probable nicotinate-nucleotide adenylyltransferase.